A 309-amino-acid chain; its full sequence is Glutaminase 2 (309 aa).

Substrate contacts are provided by serine 65, asparagine 117, glutamate 162, asparagine 169, tyrosine 193, tyrosine 245, and valine 263.

It belongs to the glutaminase family. In terms of assembly, homotetramer.

It catalyses the reaction L-glutamine + H2O = L-glutamate + NH4(+). This is Glutaminase 2 from Bacillus subtilis (strain 168).